The primary structure comprises 686 residues: MFYVKVMPALQKACEELQNQWSAKSGKWPVPETPLVAVETRRSERWPHPYLGLLPGVAAYSSTLEDYCHLYNPYIDALTRCDLGQTHRRVATQPVLSDQLCQQLKKLFSCPRNTSVKAKLEFEAAVRTHQALDNSQVFLELKTFVLNLSAFLNKRYSDRSSHIELFQKQLIMHTFFFLVSIKAPELCEKFCNIFKLYFNIDTMDQATLDIFKQKASVFLIPRRHGKTWIVVAIISILLASVQDLRIGYVAHQKHVANAVFTEVINTLHTFFPGKYMDVKKENGTIIFGLPNKKPSTLLCATCFNKNSIRGQTFQLLFVDEANFIKKDALPTILGFMLQKDAKIIFISSSNSSDQSTSFLYNLKGASERMLNVVSYVCSNHKEDFSMQDGLISCPCYSLHVPSYISIDEQIKTTTNLFLDGVFDTELMGDSSCGTLSTFQIISESALSQFELCRIDTASPQVQAHLNSTVHMYIDPAFTNNLDASGTGISVIGRLGAKTKVILGCEHFFLQKLTGTAALQIASCATSLLRSVVIIHPMIKCAQITIEGNSSQDSAVAIANFIDECAPIPVTFYHQSDKTKGVLCPLYLLGQEKAVAFESFIYAMNLGLCKASQLIVSHTIKLSFDPVTYLLEQVRAIKCQSLRDGSHTYHAKQKNLSDDLLVSVVMSLYLSSANTLPFKPLHIERFF.

A Walker A motif motif is present at residues 220-227 (IPRRHGKT). A Walker B motif motif is present at residues 315-320 (LLFVDE). The active-site For ATPase activity is the Glu320. Residues Asp474, Glu546, and Asp658 each act as for nuclease activity in the active site.

Belongs to the herpesviridae TRM3 protein family. In terms of assembly, interacts with the terminase subunits TRM1 and TRM2. Interacts with portal protein.

The protein localises to the host nucleus. Component of the molecular motor that translocates viral genomic DNA in empty capsid during DNA packaging. Forms a tripartite terminase complex together with TRM1 and TRM2 in the host cytoplasm. Once the complex reaches the host nucleus, it interacts with the capsid portal vertex. This portal forms a ring in which genomic DNA is translocated into the capsid. TRM3 carries an RNase H-like nuclease activity that plays an important role for the cleavage of concatemeric viral DNA into unit length genomes. The protein is Tripartite terminase subunit 3 of Alcelaphine herpesvirus 1 (strain C500) (AlHV-1).